A 452-amino-acid chain; its full sequence is Enolase (452 aa).

Gln167 is a (2R)-2-phosphoglycerate binding site. Glu209 functions as the Proton donor in the catalytic mechanism. Residues Asp250, Glu307, and Asp334 each contribute to the Mg(2+) site. Residues Lys359, Arg388, Ser389, and Lys410 each contribute to the (2R)-2-phosphoglycerate site. The active-site Proton acceptor is the Lys359.

Belongs to the enolase family. The cofactor is Mg(2+).

The protein localises to the cytoplasm. It is found in the secreted. It localises to the cell surface. The catalysed reaction is (2R)-2-phosphoglycerate = phosphoenolpyruvate + H2O. Its pathway is carbohydrate degradation; glycolysis; pyruvate from D-glyceraldehyde 3-phosphate: step 4/5. Catalyzes the reversible conversion of 2-phosphoglycerate (2-PG) into phosphoenolpyruvate (PEP). It is essential for the degradation of carbohydrates via glycolysis. The sequence is that of Enolase from Mesomycoplasma hyopneumoniae (strain 232) (Mycoplasma hyopneumoniae).